The primary structure comprises 585 residues: 2-succinyl-5-enolpyruvyl-6-hydroxy-3-cyclohexene-1-carboxylate synthase (585 aa).

Belongs to the TPP enzyme family. MenD subfamily. In terms of assembly, homodimer. The cofactor is Mg(2+). Requires Mn(2+) as cofactor. Thiamine diphosphate serves as cofactor.

It carries out the reaction isochorismate + 2-oxoglutarate + H(+) = 5-enolpyruvoyl-6-hydroxy-2-succinyl-cyclohex-3-ene-1-carboxylate + CO2. Its pathway is quinol/quinone metabolism; 1,4-dihydroxy-2-naphthoate biosynthesis; 1,4-dihydroxy-2-naphthoate from chorismate: step 2/7. The protein operates within cofactor biosynthesis; phylloquinone biosynthesis. Functionally, catalyzes the thiamine diphosphate-dependent decarboxylation of 2-oxoglutarate and the subsequent addition of the resulting succinic semialdehyde-thiamine pyrophosphate anion to isochorismate to yield 2-succinyl-5-enolpyruvyl-6-hydroxy-3-cyclohexene-1-carboxylate (SEPHCHC). The protein is 2-succinyl-5-enolpyruvyl-6-hydroxy-3-cyclohexene-1-carboxylate synthase of Crocosphaera subtropica (strain ATCC 51142 / BH68) (Cyanothece sp. (strain ATCC 51142)).